Consider the following 267-residue polypeptide: Small ribosomal subunit protein uS3 (267 aa).

In terms of domain architecture, KH type-2 spans 43–111 (IRKEMSKDLE…QVQLNIFEVK (69 aa)). Positions 216–267 (FEEQQAQQNNRPGRRGGDRRPRRGNRSAAPQAAEAPKAEAPAEAAPAAETKE) are disordered. Residues 241–267 (RSAAPQAAEAPKAEAPAEAAPAAETKE) are compositionally biased toward low complexity.

It belongs to the universal ribosomal protein uS3 family. Part of the 30S ribosomal subunit. Forms a tight complex with proteins S10 and S14.

Its function is as follows. Binds the lower part of the 30S subunit head. Binds mRNA in the 70S ribosome, positioning it for translation. The chain is Small ribosomal subunit protein uS3 from Bifidobacterium longum (strain DJO10A).